The chain runs to 119 residues: Large ribosomal subunit protein uL18 (119 aa).

The protein belongs to the universal ribosomal protein uL18 family. As to quaternary structure, part of the 50S ribosomal subunit; part of the 5S rRNA/L5/L18/L25 subcomplex. Contacts the 5S and 23S rRNAs.

Functionally, this is one of the proteins that bind and probably mediate the attachment of the 5S RNA into the large ribosomal subunit, where it forms part of the central protuberance. The chain is Large ribosomal subunit protein uL18 from Borreliella afzelii (strain PKo) (Borrelia afzelii).